Consider the following 883-residue polypeptide: Glutamate receptor 2 (883 aa).

An N-terminal signal peptide occupies residues 1 to 24; that stretch reads MQKIMHISVLLSPILWGLIFGVSS. At 25–543 the chain is on the extracellular side; sequence NSIQIGGLFP…GVFSFLDPLA (519 aa). Cysteines 78 and 330 form a disulfide. N-linked (GlcNAc...) asparagine glycans are attached at residues N256, N370, N406, and N413. Residues P499, T501, and R506 each contribute to the L-glutamate site. The helical transmembrane segment at 544-564 threads the bilayer; sequence YEIWMCIVFAYIGVSVVLFLV. Residues 565 to 591 lie on the Cytoplasmic side of the membrane; it reads SRFSPYEWHTEEFEDGRETQSSESTNE. The segment at residues 592 to 607 is an intramembrane region (helical; Pore-forming); it reads FGIFNSLWFSLGAFMR. The stretch at 608-610 is an intramembrane region; that stretch reads QGC. C610 carries S-palmitoyl cysteine lipidation. Over 611–616 the chain is Cytoplasmic; the sequence is DISPRS. Residues 617 to 637 traverse the membrane as a helical segment; sequence LSGRIVGGVWWFFTLIIISSY. Residues 638-812 lie on the Extracellular side of the membrane; sequence TANLAAFLTV…EKTSALSLSN (175 aa). The L-glutamate site is built by S675 and T676. S683 carries the post-translational modification Phosphoserine; by PKC. Residue S717 is modified to Phosphoserine; by PKG. Position 726 (E726) interacts with L-glutamate. The cysteines at positions 739 and 794 are disulfide-linked. A helical membrane pass occupies residues 813–833; sequence VAGVFYILVGGLGLAMLVALI. The Cytoplasmic portion of the chain corresponds to 834–883; it reads EFCYKSRAEAKRMKVAKNAQNINPSSSQNSQNFATYKEGYNVYGIESVKI. C836 carries the S-palmitoyl cysteine lipid modification. S860 and S863 each carry phosphoserine. The segment at 867-877 is required for interaction with IQSEC1; it reads ATYKEGYNVYG. Phosphotyrosine is present on Y876. Phosphoserine is present on S880.

The protein belongs to the glutamate-gated ion channel (TC 1.A.10.1) family. GRIA2 subfamily. As to quaternary structure, homotetramer or heterotetramer of pore-forming glutamate receptor subunits. Tetramers may be formed by the dimerization of dimers. May interact with MPP4. Forms a ternary complex with GRIP1 and CSPG4. Interacts with ATAD1 in an ATP-dependent manner. ATAD1-catalyzed ATP hydrolysis disrupts binding to ATAD1 and to GRIP1 and leads to AMPAR complex disassembly. Interacts with GRIP1 and GRIP2. Interacts with NSF via its C-terminus. Isoform 1, but not isoform 3, interacts with PICK1. Interacts with CACNG2. Interacts with GRIA1 and SYNDIG1. Part of a complex containing GRIA2, NSF and NAPA and/or NAPB. Interacts with SNX27 (via PDZ domain); the interaction is required for recycling to the plasma membrane when endocytosed and prevent degradation in lysosomes. Interacts with LRFN1. Found in a complex with GRIA1, GRIA3, GRIA4, CNIH2, CNIH3, CACNG2, CACNG3, CACNG4, CACNG5, CACNG7 and CACNG8. Interacts with CACNG5. Interacts with OLFM2. Interacts with AP4B1, AP4E1 and AP4M1; probably indirect it mediates the somatodendritic localization of GRIA2 in neurons. Forms a complex with GRIP1, NSG1 and STX12; controls the intracellular fate of AMPAR and the endosomal sorting of the GRIA2 subunit toward recycling and membrane targeting. Interacts with IQSEC1; the interaction is required for ARF6 activation. Interacts (heterotetramer form) with CNIH2 and CNIH3; this interaction promotes expression at the plasma membrane and extensively modulates their gating properties by slowing deactivation and desensitization kinetics. In terms of processing, phosphorylation at Tyr-876 is required for interaction with IQSEC1 and ARF6 activation, which in turn triggers AMPAR internalization for persistent synaptic depression. Post-translationally, palmitoylated. Depalmitoylated upon L-glutamate stimulation. ZDHHC3/GODZ specifically palmitoylates Cys-610, which leads to Golgi retention and decreased cell surface expression. In contrast, Cys-836 palmitoylation does not affect cell surface expression but regulates stimulation-dependent endocytosis. N-glycosylated. In terms of processing, ubiquitinated by RNF167, leading to its degradation.

The protein localises to the cell membrane. Its subcellular location is the postsynaptic cell membrane. It localises to the postsynaptic density membrane. It catalyses the reaction Ca(2+)(in) = Ca(2+)(out). The catalysed reaction is Na(+)(in) = Na(+)(out). In terms of biological role, ionotropic glutamate receptor that functions as a ligand-gated cation channel, gated by L-glutamate and glutamatergic agonists such as alpha-amino-3-hydroxy-5-methyl-4-isoxazolepropionic acid (AMPA), quisqualic acid, and kainic acid. L-glutamate acts as an excitatory neurotransmitter at many synapses in the central nervous system and plays an important role in fast excitatory synaptic transmission. Binding of the excitatory neurotransmitter L-glutamate induces a conformation change, leading to the opening of the cation channel, and thereby converts the chemical signal to an electrical impulse upon entry of monovalent and divalent cations such as sodium and calcium. The receptor then desensitizes rapidly and enters in a transient inactive state, characterized by the presence of bound agonist. In the presence of CACNG4 or CACNG7 or CACNG8, shows resensitization which is characterized by a delayed accumulation of current flux upon continued application of L-glutamate. Through complex formation with NSG1, GRIP1 and STX12 controls the intracellular fate of AMPAR and the endosomal sorting of the GRIA2 subunit toward recycling and membrane targeting. The protein is Glutamate receptor 2 of Macaca fascicularis (Crab-eating macaque).